The primary structure comprises 85 residues: RNA-binding protein Hfq (85 aa).

One can recognise a Sm domain in the interval 9–68 (DPFLNALRRERIPVSIYLVNGIKLQGQVESFDQFVILLKNTVSQMVYKHAISTVVPARPV).

Belongs to the Hfq family. Homohexamer.

Functionally, RNA chaperone that binds small regulatory RNA (sRNAs) and mRNAs to facilitate mRNA translational regulation in response to envelope stress, environmental stress and changes in metabolite concentrations. Also binds with high specificity to tRNAs. The chain is RNA-binding protein Hfq from Tolumonas auensis (strain DSM 9187 / NBRC 110442 / TA 4).